Consider the following 220-residue polypeptide: UPF0441 protein Spro_4274 (220 aa).

The interval 181–220 (MAPKPAVTNTVTRGGFGESVAKQTSMQRSSATSSSRSMGG) is disordered. The span at 203-220 (QTSMQRSSATSSSRSMGG) shows a compositional bias: low complexity.

It belongs to the UPF0441 family.

The sequence is that of UPF0441 protein Spro_4274 from Serratia proteamaculans (strain 568).